We begin with the raw amino-acid sequence, 328 residues long: Malate dehydrogenase (328 aa).

An NAD(+)-binding site is contributed by 12 to 18; the sequence is GAAGQIG. 2 residues coordinate substrate: R95 and R101. NAD(+) contacts are provided by residues N108, Q115, and 132 to 134; that span reads VGN. Positions 134 and 165 each coordinate substrate. The active-site Proton acceptor is H190.

Belongs to the LDH/MDH superfamily. MDH type 2 family.

The enzyme catalyses (S)-malate + NAD(+) = oxaloacetate + NADH + H(+). Its function is as follows. Catalyzes the reversible oxidation of malate to oxaloacetate. In Leptothrix cholodnii (strain ATCC 51168 / LMG 8142 / SP-6) (Leptothrix discophora (strain SP-6)), this protein is Malate dehydrogenase.